We begin with the raw amino-acid sequence, 459 residues long: Peptidyl-prolyl cis-trans isomerase FKBP4 (459 aa).

Methionine 1 carries the post-translational modification N-acetylmethionine; in peptidyl-prolyl cis-trans isomerase FKBP4; alternate. Residues 1-24 (MTAEEMKATESGAQSAPLPMEGVD) are disordered. N-acetylthreonine; in peptidyl-prolyl cis-trans isomerase FKBP4, N-terminally processed; partial is present on threonine 2. The PPIase FKBP-type 1 domain occupies 50 to 138 (GDRVFVHYTG…VFEVELFEFK (89 aa)). The residue at position 143 (threonine 143) is a Phosphothreonine; by CK2. Residues 167-253 (GAIVEVALEG…KYELHLKSFE (87 aa)) enclose the PPIase FKBP-type 2 domain. Phosphotyrosine is present on tyrosine 220. The tract at residues 267 to 400 (LEQSTIVKER…TQLAVCQQRI (134 aa)) is interaction with tubulin. TPR repeat units follow at residues 270–303 (STIVKERGTVYFKEGKYKQALLQYKKIVSWLEYE), 319–352 (LASHLNLAMCHLKLQAFSAAIESCNKALELDSNN), and 353–386 (EKGLFRRGEAHLAVNDFELARADFQKVLQLYPNN). Lysine 282 carries the post-translational modification N6-acetyllysine. Arginine 373 is modified (omega-N-methylarginine). Residues 421-459 (EENKAKAEASSGDHPTDTEMKEEQKSNTAGSQSQVETEA) form a disordered region. A compositionally biased stretch (basic and acidic residues) spans 434 to 445 (HPTDTEMKEEQK). Position 436 is a phosphothreonine (threonine 436). Lysine 441 participates in a covalent cross-link: Glycyl lysine isopeptide (Lys-Gly) (interchain with G-Cter in SUMO1). Residues 446-459 (SNTAGSQSQVETEA) show a composition bias toward polar residues. Serine 451 and serine 453 each carry phosphoserine.

Homodimer. Interacts with GLMN. Associates with HSP90AA1 and HSP70 in steroid hormone receptor complexes. Also interacts with peroxisomal phytanoyl-CoA alpha-hydroxylase (PHYH). Interacts with NR3C1 and dynein. Interacts with HSF1 in the HSP90 complex. Associates with tubulin. Interacts with MAPT/TAU. Interacts (via TPR domain) with S100A1, S100A2 and S100A6; the interaction is Ca(2+) dependent. Interaction with S100A1 and S100A2 (but not with S100A6) leads to inhibition of FKBP4-HSP90 interaction. Interacts with dynein; causes partially NR3C1 transport to the nucleus. Post-translationally, phosphorylation by CK2 results in loss of HSP90 binding activity. In terms of tissue distribution, widely expressed.

Its subcellular location is the cytoplasm. It localises to the cytosol. It is found in the mitochondrion. The protein localises to the nucleus. The protein resides in the cytoskeleton. Its subcellular location is the cell projection. It localises to the axon. It carries out the reaction [protein]-peptidylproline (omega=180) = [protein]-peptidylproline (omega=0). Its activity is regulated as follows. Inhibited by FK506. In terms of biological role, immunophilin protein with PPIase and co-chaperone activities. Component of steroid receptors heterocomplexes through interaction with heat-shock protein 90 (HSP90). May play a role in the intracellular trafficking of heterooligomeric forms of steroid hormone receptors between cytoplasm and nuclear compartments. The isomerase activity controls neuronal growth cones via regulation of TRPC1 channel opening. Also acts as a regulator of microtubule dynamics by inhibiting MAPT/TAU ability to promote microtubule assembly. May have a protective role against oxidative stress in mitochondria. In Homo sapiens (Human), this protein is Peptidyl-prolyl cis-trans isomerase FKBP4 (FKBP4).